The chain runs to 460 residues: V-type ATP synthase beta chain (460 aa).

It belongs to the ATPase alpha/beta chains family.

Functionally, produces ATP from ADP in the presence of a proton gradient across the membrane. The V-type beta chain is a regulatory subunit. This is V-type ATP synthase beta chain from Clostridium perfringens (strain ATCC 13124 / DSM 756 / JCM 1290 / NCIMB 6125 / NCTC 8237 / Type A).